Here is a 405-residue protein sequence, read N- to C-terminus: Nicotinate phosphoribosyltransferase (405 aa).

The residue at position 230 (H230) is a Phosphohistidine; by autocatalysis.

The protein belongs to the NAPRTase family. Post-translationally, transiently phosphorylated on a His residue during the reaction cycle. Phosphorylation strongly increases the affinity for substrates and increases the rate of nicotinate D-ribonucleotide production. Dephosphorylation regenerates the low-affinity form of the enzyme, leading to product release.

It catalyses the reaction nicotinate + 5-phospho-alpha-D-ribose 1-diphosphate + ATP + H2O = nicotinate beta-D-ribonucleotide + ADP + phosphate + diphosphate. Its pathway is cofactor biosynthesis; NAD(+) biosynthesis; nicotinate D-ribonucleotide from nicotinate: step 1/1. Functionally, catalyzes the synthesis of beta-nicotinate D-ribonucleotide from nicotinate and 5-phospho-D-ribose 1-phosphate at the expense of ATP. This chain is Nicotinate phosphoribosyltransferase, found in Bordetella bronchiseptica (strain ATCC BAA-588 / NCTC 13252 / RB50) (Alcaligenes bronchisepticus).